Here is a 140-residue protein sequence, read N- to C-terminus: MDSRIPYDDYPVVFLPAYENPPAWIPPHERVYHPDYNNELTQFLPRIVTLKKPPGAQLGFNIRGGKASQLGIFISKVIPDSDAHRAGLQEGDQVLAVNDVDFQDIEHSKAVEILKTAREISMRVRFFPYNYHRQKERTVH.

One can recognise a PDZ domain in the interval 47-129 (IVTLKKPPGA…ISMRVRFFPY (83 aa)).

In terms of assembly, interacts with ATP2B1, ATP2B2, ATP2B3, ATP2B4 and ATP7A. Interacts with PLEKHA7 (via WW domains) at zonula adherens; this interaction is essential for the interaction between PLEKHA7 and the ADAM10-binding protein TSPAN33. Interacts with SLC5A6.

It is found in the cytoplasm. The protein localises to the cell junction. Its subcellular location is the adherens junction. It localises to the cell membrane. In terms of biological role, mediates docking of ADAM10 to zonula adherens by interacting with PLEKHA7 which is required for PLEKHA7 to interact with the ADAM10-binding protein TSPAN33. The protein is PDZ domain-containing protein 11 (PDZD11) of Bos taurus (Bovine).